A 227-amino-acid chain; its full sequence is Phosphoribosylformylglycinamidine synthase subunit PurQ (227 aa).

Residues 2 to 227 form the Glutamine amidotransferase type-1 domain; that stretch reads RWAIVRFPGA…FLGLVKEVAR (226 aa). Cys85 functions as the Nucleophile in the catalytic mechanism. Active-site residues include His200 and Glu202.

As to quaternary structure, part of the FGAM synthase complex composed of 1 PurL, 1 PurQ and 2 PurS subunits.

The protein localises to the cytoplasm. It carries out the reaction N(2)-formyl-N(1)-(5-phospho-beta-D-ribosyl)glycinamide + L-glutamine + ATP + H2O = 2-formamido-N(1)-(5-O-phospho-beta-D-ribosyl)acetamidine + L-glutamate + ADP + phosphate + H(+). The catalysed reaction is L-glutamine + H2O = L-glutamate + NH4(+). Its pathway is purine metabolism; IMP biosynthesis via de novo pathway; 5-amino-1-(5-phospho-D-ribosyl)imidazole from N(2)-formyl-N(1)-(5-phospho-D-ribosyl)glycinamide: step 1/2. In terms of biological role, part of the phosphoribosylformylglycinamidine synthase complex involved in the purines biosynthetic pathway. Catalyzes the ATP-dependent conversion of formylglycinamide ribonucleotide (FGAR) and glutamine to yield formylglycinamidine ribonucleotide (FGAM) and glutamate. The FGAM synthase complex is composed of three subunits. PurQ produces an ammonia molecule by converting glutamine to glutamate. PurL transfers the ammonia molecule to FGAR to form FGAM in an ATP-dependent manner. PurS interacts with PurQ and PurL and is thought to assist in the transfer of the ammonia molecule from PurQ to PurL. The chain is Phosphoribosylformylglycinamidine synthase subunit PurQ from Thermus thermophilus (strain ATCC 27634 / DSM 579 / HB8).